Consider the following 578-residue polypeptide: Kelch-like protein 30 (578 aa).

The BTB domain maps to 33–100 (ADVTLLVGGR…VYTGRLTITQ (68 aa)). In terms of domain architecture, BACK spans 153 to 255 (KAWAFLRENF…EACRAALSQG (103 aa)). 6 Kelch repeats span residues 270-326 (VLVV…ALNN), 327-377 (NIYV…ALNG), 378-422 (EIYV…GCRG), 424-471 (LYLV…ALHG), 473-513 (LYLI…PLGD), and 514-563 (ALYV…TVFL).

The chain is Kelch-like protein 30 (KLHL30) from Homo sapiens (Human).